We begin with the raw amino-acid sequence, 406 residues long: 3-oxoacyl-[acyl-carrier-protein] synthase 1 (406 aa).

The region spanning 1-405 (MRRVVITGIG…GTNVSLIVKK (405 aa)) is the Ketosynthase family 3 (KS3) domain. Residues C164, H299, and H335 each act as for beta-ketoacyl synthase activity in the active site.

The protein belongs to the thiolase-like superfamily. Beta-ketoacyl-ACP synthases family. In terms of assembly, homodimer.

It is found in the cytoplasm. It catalyses the reaction a fatty acyl-[ACP] + malonyl-[ACP] + H(+) = a 3-oxoacyl-[ACP] + holo-[ACP] + CO2. The catalysed reaction is (3Z)-decenoyl-[ACP] + malonyl-[ACP] + H(+) = 3-oxo-(5Z)-dodecenoyl-[ACP] + holo-[ACP] + CO2. The protein operates within lipid metabolism; fatty acid biosynthesis. Its function is as follows. Involved in the type II fatty acid elongation cycle. Catalyzes the elongation of a wide range of acyl-ACP by the addition of two carbons from malonyl-ACP to an acyl acceptor. Can also use unsaturated fatty acids. Catalyzes a key reaction in unsaturated fatty acid (UFA) synthesis, the elongation of the cis-3-decenoyl-ACP produced by FabA. The sequence is that of 3-oxoacyl-[acyl-carrier-protein] synthase 1 (fabB) from Buchnera aphidicola subsp. Acyrthosiphon pisum (strain APS) (Acyrthosiphon pisum symbiotic bacterium).